Consider the following 789-residue polypeptide: Probable 3-hydroxyacyl-CoA dehydrogenase (789 aa).

This sequence belongs to the 3-hydroxyacyl-CoA dehydrogenase family.

It carries out the reaction a (3S)-3-hydroxyacyl-CoA + NAD(+) = a 3-oxoacyl-CoA + NADH + H(+). It participates in lipid metabolism; fatty acid beta-oxidation. Involved in the degradation of long-chain fatty acids. The sequence is that of Probable 3-hydroxyacyl-CoA dehydrogenase (fadN) from Bacillus subtilis (strain 168).